Reading from the N-terminus, the 211-residue chain is Protein-L-isoaspartate O-methyltransferase (211 aa).

Ser-59 is a catalytic residue.

It belongs to the methyltransferase superfamily. L-isoaspartyl/D-aspartyl protein methyltransferase family.

Its subcellular location is the cytoplasm. It catalyses the reaction [protein]-L-isoaspartate + S-adenosyl-L-methionine = [protein]-L-isoaspartate alpha-methyl ester + S-adenosyl-L-homocysteine. Its function is as follows. Catalyzes the methyl esterification of L-isoaspartyl residues in peptides and proteins that result from spontaneous decomposition of normal L-aspartyl and L-asparaginyl residues. It plays a role in the repair and/or degradation of damaged proteins. This chain is Protein-L-isoaspartate O-methyltransferase, found in Ignicoccus hospitalis (strain KIN4/I / DSM 18386 / JCM 14125).